We begin with the raw amino-acid sequence, 438 residues long: Protein translocase subunit SecY (438 aa).

Helical transmembrane passes span 18-38, 76-96, 121-141, 154-174, 177-197, 212-232, 269-289, 315-335, 375-395, and 398-418; these read ILFT…PSPG, VGVM…VVIP, IALA…GGLL, IFSL…VMWM, LITE…GIAA, GVIF…VVFV, VIPV…TQLV, PVYI…YVSV, LPGS…LQIG, and GEVQ…GVGL.

This sequence belongs to the SecY/SEC61-alpha family. In terms of assembly, component of the Sec protein translocase complex. Heterotrimer consisting of SecY, SecE and SecG subunits. The heterotrimers can form oligomers, although 1 heterotrimer is thought to be able to translocate proteins. Interacts with the ribosome. Interacts with SecDF, and other proteins may be involved. Interacts with SecA.

It localises to the cell membrane. In terms of biological role, the central subunit of the protein translocation channel SecYEG. Consists of two halves formed by TMs 1-5 and 6-10. These two domains form a lateral gate at the front which open onto the bilayer between TMs 2 and 7, and are clamped together by SecE at the back. The channel is closed by both a pore ring composed of hydrophobic SecY resides and a short helix (helix 2A) on the extracellular side of the membrane which forms a plug. The plug probably moves laterally to allow the channel to open. The ring and the pore may move independently. This is Protein translocase subunit SecY from Mycobacterium leprae (strain TN).